Here is a 504-residue protein sequence, read N- to C-terminus: Glutamate--tRNA ligase (504 aa).

Residues 14 to 24 carry the 'HIGH' region motif; it reads PSPTGYLHVGG. Positions 261–265 match the 'KMSKS' region motif; it reads KLSKR. Lysine 264 provides a ligand contact to ATP.

Belongs to the class-I aminoacyl-tRNA synthetase family. Glutamate--tRNA ligase type 1 subfamily. As to quaternary structure, monomer.

It is found in the cytoplasm. The enzyme catalyses tRNA(Glu) + L-glutamate + ATP = L-glutamyl-tRNA(Glu) + AMP + diphosphate. In terms of biological role, catalyzes the attachment of glutamate to tRNA(Glu) in a two-step reaction: glutamate is first activated by ATP to form Glu-AMP and then transferred to the acceptor end of tRNA(Glu). This Chlorobium luteolum (strain DSM 273 / BCRC 81028 / 2530) (Pelodictyon luteolum) protein is Glutamate--tRNA ligase.